The primary structure comprises 1204 residues: Exportin-5 (1204 aa).

Alanine 2 carries the N-acetylalanine modification. Residues 2-108 are necessary for interaction with Ran; the sequence is AMDQVNALCE…ANGTLNILEE (107 aa). An N6-acetyllysine modification is found at lysine 396. Residues 533 to 640 are necessary for interaction with ILF3; sequence ELLQMVLNFD…KQLLSNELLL (108 aa). A pre-miRNA binding region spans residues 641–642; it reads TQ. Serine 826 is modified (phosphoserine).

Belongs to the exportin family. Component of a nuclear export receptor complex composed of XPO5, RAN, dsRNA-binding proteins and dsRNA. Found in a nuclear export complex with XPO5, RAN, EEF1A1, and aminoacylated tRNA. Found in a nuclear export complex with XPO5, RAN, ILF3 and dsRNA. Found in a nuclear export complex with XPO5, RAN and pre-miRNA. Found in a nuclear export complex with XPO5, RAN, ILF3 and minihelix VA1 dsRNA. Found in a nuclear export complex with XPO5, RAN, ILF3, ZNF346 and dsRNA. Interacts with EEF1A1, ILF3, NUP153, NUP214 and ZNF346. Interacts with RAN and cargo proteins in a GTP-dependent manner. Interacts with isoform 5 of ADAR/ADAR1 (via DRBM domains). Interacts with SMAD4; mediates nuclear export of SMAD4. Interacts with RAN (GTP-bound form). In terms of tissue distribution, expressed in heart, brain, placenta, lung, skeletal muscle, kidney and pancreas.

It localises to the nucleus. The protein resides in the cytoplasm. Its function is as follows. Mediates the nuclear export of proteins bearing a double-stranded RNA binding domain (dsRBD) and double-stranded RNAs (cargos). XPO5 in the nucleus binds cooperatively to the RNA and to the GTPase Ran in its active GTP-bound form. Proteins containing dsRBDs can associate with this trimeric complex through the RNA. Docking of this complex to the nuclear pore complex (NPC) is mediated through binding to nucleoporins. Upon transit of a nuclear export complex into the cytoplasm, hydrolysis of Ran-GTP to Ran-GDP (induced by RANBP1 and RANGAP1, respectively) cause disassembly of the complex and release of the cargo from the export receptor. XPO5 then returns to the nuclear compartment by diffusion through the nuclear pore complex, to mediate another round of transport. The directionality of nuclear export is thought to be conferred by an asymmetric distribution of the GTP- and GDP-bound forms of Ran between the cytoplasm and nucleus. Overexpression may in some circumstances enhance RNA-mediated gene silencing (RNAi). Mediates nuclear export of isoform 5 of ADAR/ADAR1 in a RanGTP-dependent manner. In terms of biological role, mediates the nuclear export of micro-RNA precursors, which form short hairpins. Also mediates the nuclear export of synthetic short hairpin RNAs used for RNA interference. In some circumstances can also mediate the nuclear export of deacylated and aminoacylated tRNAs. Specifically recognizes dsRNAs that lack a 5'-overhang in a sequence-independent manner, have only a short 3'-overhang, and that have a double-stranded length of at least 15 base-pairs. Binding is dependent on Ran-GTP. (Microbial infection) Mediates the nuclear export of adenovirus VA1 dsRNA. The protein is Exportin-5 (XPO5) of Homo sapiens (Human).